A 587-amino-acid polypeptide reads, in one-letter code: Beta-(1--&gt;2)glucan export ATP-binding/permease protein NdvA (587 aa).

The ABC transmembrane type-1 domain occupies 21 to 301 (VSLVVVANIV…MRQFATQIFE (281 aa)). The next 6 helical transmembrane spans lie at 23-43 (LVVVANIVLATITIAEPILFG), 57-77 (PILFMWATFAVFNTIAFVLVA), 128-148 (GLWLEFMRNHLSTVIALALLI), 158-178 (LSAVLMVLAIAYWLIGRVVMS), 248-268 (MASTIAMMVVLIIGTMLVQAG), and 272-292 (VGDVIAFIGFANLLIGRLDLM). One can recognise an ABC transporter domain in the interval 335 to 569 (IEFRDVSFGF…NGRFAALLRA (235 aa)). An ATP-binding site is contributed by 368 to 375 (GPTGAGKT).

This sequence belongs to the ABC transporter superfamily. Beta-(1--&gt;2)glucan exporter (TC 3.A.1.108.1) family. Homodimer.

The protein resides in the cell inner membrane. It catalyses the reaction [(1-&gt;2)-beta-D-glucosyl](n)(in) + ATP + H2O = [(1-&gt;2)-beta-D-glucosyl](n)(out) + ADP + phosphate + H(+). Its function is as follows. Involved in beta-(1--&gt;2)glucan export. Transmembrane domains (TMD) form a pore in the inner membrane and the ATP-binding domain (NBD) is responsible for energy generation. The polypeptide is Beta-(1--&gt;2)glucan export ATP-binding/permease protein NdvA (Rhizobium johnstonii (strain DSM 114642 / LMG 32736 / 3841) (Rhizobium leguminosarum bv. viciae)).